The primary structure comprises 568 residues: Pyruvate carboxylase subunit B (568 aa).

A Pyruvate carboxyltransferase domain is found at 4–264 (IKVVETAFRD…DTGLDLEILK (261 aa)). Substrate-binding positions include 12–16 (RDAHQ) and Arg83. Asp13 provides a ligand contact to a divalent metal cation. A divalent metal cation contacts are provided by Lys174, His203, and His205. Residue Lys174 is modified to N6-carboxylysine. Residue Thr339 coordinates substrate. The region spanning 493–568 (PEPVDVEGAV…ETGDIIMVIK (76 aa)) is the Biotinyl-binding domain. Residue Lys534 is modified to N6-biotinyllysine.

Heterooctamer of four A and four B subunits. The cofactor is Mg(2+). It depends on Mn(2+) as a cofactor. Co(2+) serves as cofactor.

It carries out the reaction hydrogencarbonate + pyruvate + ATP = oxaloacetate + ADP + phosphate + H(+). With respect to regulation, inhibited by ADP and alpha-ketoglutarate. Pyruvate carboxylase catalyzes a 2-step reaction, involving the ATP-dependent carboxylation of the covalently attached biotin in the first step and the transfer of the carboxyl group to pyruvate in the second. In Methanothermobacter thermautotrophicus (strain ATCC 29096 / DSM 1053 / JCM 10044 / NBRC 100330 / Delta H) (Methanobacterium thermoautotrophicum), this protein is Pyruvate carboxylase subunit B (pycB).